The primary structure comprises 198 residues: V-type proton ATPase subunit E (198 aa).

Belongs to the V-ATPase E subunit family.

Its function is as follows. Produces ATP from ADP in the presence of a proton gradient across the membrane. The chain is V-type proton ATPase subunit E from Borrelia hermsii (strain HS1 / DAH).